We begin with the raw amino-acid sequence, 631 residues long: Translation factor GUF1, mitochondrial (631 aa).

A mitochondrion-targeting transit peptide spans 1-19 (MFNRRLLRHVRYAFQQVRS). In terms of domain architecture, tr-type G spans 33-214 (ERYRNFSIVA…AIVDRIPPPT (182 aa)). Residues 42–49 (AHVDHGKS), 107–111 (DTPGH), and 161–164 (NKID) each bind GTP.

It belongs to the TRAFAC class translation factor GTPase superfamily. Classic translation factor GTPase family. LepA subfamily.

Its subcellular location is the mitochondrion inner membrane. It catalyses the reaction GTP + H2O = GDP + phosphate + H(+). Promotes mitochondrial protein synthesis. May act as a fidelity factor of the translation reaction, by catalyzing a one-codon backward translocation of tRNAs on improperly translocated ribosomes. Binds to mitochondrial ribosomes in a GTP-dependent manner. The chain is Translation factor GUF1, mitochondrial from Kluyveromyces lactis (strain ATCC 8585 / CBS 2359 / DSM 70799 / NBRC 1267 / NRRL Y-1140 / WM37) (Yeast).